The sequence spans 338 residues: tRNA N6-adenosine threonylcarbamoyltransferase (338 aa).

Fe cation contacts are provided by histidine 111 and histidine 115. Substrate contacts are provided by residues 134–138 (LVSGG), aspartate 167, glycine 180, and asparagine 272. A Fe cation-binding site is contributed by aspartate 300.

It belongs to the KAE1 / TsaD family. Fe(2+) serves as cofactor.

The protein localises to the cytoplasm. It catalyses the reaction L-threonylcarbamoyladenylate + adenosine(37) in tRNA = N(6)-L-threonylcarbamoyladenosine(37) in tRNA + AMP + H(+). Required for the formation of a threonylcarbamoyl group on adenosine at position 37 (t(6)A37) in tRNAs that read codons beginning with adenine. Is involved in the transfer of the threonylcarbamoyl moiety of threonylcarbamoyl-AMP (TC-AMP) to the N6 group of A37, together with TsaE and TsaB. TsaD likely plays a direct catalytic role in this reaction. The chain is tRNA N6-adenosine threonylcarbamoyltransferase from Shewanella pealeana (strain ATCC 700345 / ANG-SQ1).